A 318-amino-acid polypeptide reads, in one-letter code: MFFINIISLIIPILLAVAFLTLVERKVLGYMQLRKGPNIVGPYGLLQPIADAVKLFTKEPLRPLTSSMSMFILAPILALSLALTMWIPLPMPYPLINMNLGVLFMLAMSSLAVYSILWSGWASNSKYALIGALRAVAQTISYEVTLAIILLSVLLMNGSFTLSTLIITQEHMWLIFPAWPLAMMWFISTLAETNRAPFDLTEGESELVSGFNVEYAAGPFALFFLAEYANIIMMNILTTILFFGAFHNPFMPELYSINFTMKTLLLTICFLWIRASYPRFRYDQLMHLLWKNFLPLTLALCMWHVALPIITASIPPQT.

8 consecutive transmembrane segments (helical) span residues 2-22, 70-90, 100-120, 147-167, 171-191, 223-243, 253-273, and 294-314; these read FFINIISLIIPILLAVAFLTL, MFILAPILALSLALTMWIPLP, LGVLFMLAMSSLAVYSILWSG, AIILLSVLLMNGSFTLSTLII, HMWLIFPAWPLAMMWFISTLA, FFLAEYANIIMMNILTTILFF, ELYSINFTMKTLLLTICFLWI, and LPLTLALCMWHVALPIITASI.

It belongs to the complex I subunit 1 family. As to quaternary structure, core subunit of respiratory chain NADH dehydrogenase (Complex I) which is composed of 45 different subunits.

Its subcellular location is the mitochondrion inner membrane. The catalysed reaction is a ubiquinone + NADH + 5 H(+)(in) = a ubiquinol + NAD(+) + 4 H(+)(out). Core subunit of the mitochondrial membrane respiratory chain NADH dehydrogenase (Complex I) which catalyzes electron transfer from NADH through the respiratory chain, using ubiquinone as an electron acceptor. Essential for the catalytic activity and assembly of complex I. The chain is NADH-ubiquinone oxidoreductase chain 1 (MT-ND1) from Canis lupus familiaris (Dog).